Here is a 92-residue protein sequence, read N- to C-terminus: Larval cuticle protein 9 (92 aa).

The first 16 residues, 1 to 16 (MKFVIVLACLLAVVFA), serve as a signal peptide directing secretion. Residues 31-92 (LLDFNYAYEL…TGYHPKVVEA (62 aa)) enclose the Chitin-binding type R&amp;R domain.

Functionally, component of the cuticle of the larva. This is Larval cuticle protein 9 (Lcp9) from Drosophila melanogaster (Fruit fly).